The following is a 547-amino-acid chain: CAP-Gly domain-containing linker protein 3 (547 aa).

Residues 1–49 (MTKTDPAPMAPPPRGEEEEEEEEDEPVPEAPSPTQERRQKPVVHPSAPA) form a disordered region. Residues 16–27 (EEEEEEEEDEPV) are compositionally biased toward acidic residues. ANK repeat units lie at residues 117–158 (TDMT…LRSR), 160–191 (TNMN…VVNS), and 197–229 (NHGS…LRNR). Residues 314–356 (GTTEFASGQWVGVELDEPEGKNDGSVGGVRYFICPPKQGLFAS) form the CAP-Gly 1 domain. A disordered region spans residues 365-413 (DAPPSSVTSTPRTPRMDFSRVTGKGRREHKGKKKSPSSPSLGSLQQREG). Positions 367-377 (PPSSVTSTPRT) are enriched in low complexity. Thr374 is subject to Phosphothreonine. Residues 387 to 399 (GKGRREHKGKKKS) show a composition bias toward basic residues. Residues Ser399 and Ser401 each carry the phosphoserine modification. The 43-residue stretch at 436–478 (GKTDFAPGYWYGIELDQPTGKHDGSVFGVRYFTCAPRHGVFAP) folds into the CAP-Gly 2 domain. The interval 488–547 (STDPPGDSVGAKKVHQVTMTQPKRTFTTVRTPKDIASENSISRLLFCCWFPWMLRAEMQS) is goLD. S-palmitoyl cysteine attachment occurs at residues Cys534 and Cys535.

In terms of assembly, homodimer. Interacts with AKT1 and AKT2; when AKT1 and AKT2 are phosphorylated and activated, affinity is higher for AKT2. Interacts with ZDHHC13 (via ANK repeats). Interacts with ZDHHC17 (via ANK repeats). Palmitoylation by ZDHHC17 regulates association with the plasma membrane.

The protein localises to the cell membrane. It localises to the cytoplasm. Its subcellular location is the golgi apparatus. It is found in the golgi stack. Functionally, functions as a cytoplasmic linker protein. Involved in TGN-endosome dynamics. May modulate the cellular compartmentalization of AKT kinase family and promote its cell membrane localization, thereby playing a role in glucose transport in adipocytes. In Mus musculus (Mouse), this protein is CAP-Gly domain-containing linker protein 3 (Clip3).